We begin with the raw amino-acid sequence, 473 residues long: Xylosidase/arabinosidase (473 aa).

Asp18 acts as the Proton acceptor in catalysis. Residue Glu209 is the Proton donor of the active site.

It belongs to the glycosyl hydrolase 43 family. As to quaternary structure, homotetramer.

The enzyme catalyses Hydrolysis of (1-&gt;4)-beta-D-xylans, to remove successive D-xylose residues from the non-reducing termini.. It carries out the reaction Hydrolysis of terminal non-reducing alpha-L-arabinofuranoside residues in alpha-L-arabinosides.. In Thermoclostridium stercorarium (Clostridium stercorarium), this protein is Xylosidase/arabinosidase (xylA).